The primary structure comprises 160 residues: Cytochrome b6-f complex subunit 4 (160 aa).

3 consecutive transmembrane segments (helical) span residues 36-56 (LLYIFPVVILGTIACIVGLSV), 95-115 (LLGIALQTLVPLGLMLIPFIE), and 128-148 (IAMAVFLFGTATTIYLGIGAA).

Belongs to the cytochrome b family. PetD subfamily. As to quaternary structure, the 4 large subunits of the cytochrome b6-f complex are cytochrome b6, subunit IV (17 kDa polypeptide, PetD), cytochrome f and the Rieske protein, while the 4 small subunits are PetG, PetL, PetM and PetN. The complex functions as a dimer.

It localises to the cellular thylakoid membrane. Functionally, component of the cytochrome b6-f complex, which mediates electron transfer between photosystem II (PSII) and photosystem I (PSI), cyclic electron flow around PSI, and state transitions. The sequence is that of Cytochrome b6-f complex subunit 4 from Synechococcus sp. (strain CC9311).